A 327-amino-acid chain; its full sequence is DNA-directed RNA polymerase subunit alpha (327 aa).

The segment at 1-233 (MQNSASEFLK…DQLSIFADLQ (233 aa)) is alpha N-terminal domain (alpha-NTD). The segment at 247–327 (IDPILLRPVD…NWPPAGLEKP (81 aa)) is alpha C-terminal domain (alpha-CTD).

It belongs to the RNA polymerase alpha chain family. In terms of assembly, homodimer. The RNAP catalytic core consists of 2 alpha, 1 beta, 1 beta' and 1 omega subunit. When a sigma factor is associated with the core the holoenzyme is formed, which can initiate transcription.

The catalysed reaction is RNA(n) + a ribonucleoside 5'-triphosphate = RNA(n+1) + diphosphate. In terms of biological role, DNA-dependent RNA polymerase catalyzes the transcription of DNA into RNA using the four ribonucleoside triphosphates as substrates. This is DNA-directed RNA polymerase subunit alpha from Chromobacterium violaceum (strain ATCC 12472 / DSM 30191 / JCM 1249 / CCUG 213 / NBRC 12614 / NCIMB 9131 / NCTC 9757 / MK).